The following is an 83-amino-acid chain: Cell division protein ZapB (83 aa).

The stretch at 7-80 (EMLEKLEAKV…RVRTLLGKMD (74 aa)) forms a coiled coil.

Belongs to the ZapB family. In terms of assembly, homodimer. The ends of the coiled-coil dimer bind to each other, forming polymers. Interacts with FtsZ.

It localises to the cytoplasm. Non-essential, abundant cell division factor that is required for proper Z-ring formation. It is recruited early to the divisome by direct interaction with FtsZ, stimulating Z-ring assembly and thereby promoting cell division earlier in the cell cycle. Its recruitment to the Z-ring requires functional FtsA or ZipA. The polypeptide is Cell division protein ZapB (Photobacterium profundum (strain SS9)).